We begin with the raw amino-acid sequence, 312 residues long: Serine/threonine-protein kinase ppk11 (312 aa).

The 253-residue stretch at Tyr6 to Ile258 folds into the Protein kinase domain. Residues Ile12–Val20 and Lys35 each bind ATP. Asp127 (proton acceptor) is an active-site residue.

The protein belongs to the protein kinase superfamily. Ser/Thr protein kinase family.

It localises to the cytoplasm. Its subcellular location is the nucleus. The enzyme catalyses L-seryl-[protein] + ATP = O-phospho-L-seryl-[protein] + ADP + H(+). It carries out the reaction L-threonyl-[protein] + ATP = O-phospho-L-threonyl-[protein] + ADP + H(+). In Schizosaccharomyces pombe (strain 972 / ATCC 24843) (Fission yeast), this protein is Serine/threonine-protein kinase ppk11 (ppk11).